A 285-amino-acid polypeptide reads, in one-letter code: Acetylglutamate kinase (285 aa).

Substrate-binding positions include 64 to 65 (GG), arginine 86, and asparagine 179.

The protein belongs to the acetylglutamate kinase family. ArgB subfamily.

The protein resides in the plastid. It localises to the chloroplast. It carries out the reaction N-acetyl-L-glutamate + ATP = N-acetyl-L-glutamyl 5-phosphate + ADP. The protein operates within amino-acid biosynthesis; L-arginine biosynthesis; N(2)-acetyl-L-ornithine from L-glutamate: step 2/4. Catalyzes the ATP-dependent phosphorylation of N-acetyl-L-glutamate. This is Acetylglutamate kinase from Pyropia yezoensis (Susabi-nori).